The following is a 709-amino-acid chain: Disintegrin and metalloproteinase domain-containing protein 5 (709 aa).

Residues 1–98 (MKTPISSILK…TLSGFIHVIY (98 aa)) constitute a propeptide that is removed on maturation. The Extracellular segment spans residues 1-649 (MKTPISSILK…QQNRGIHPKQ (649 aa)). The Peptidase M12B domain maps to 141 to 334 (RYIKTDIVVD…QDLECLQDLP (194 aa)). Disulfide bonds link Cys247-Cys329, Cys289-Cys314, Cys291-Cys296, Cys406-Cys426, Cys585-Cys597, Cys591-Cys603, and Cys605-Cys614. One can recognise a Disintegrin domain in the interval 346–434 (RRICGNGILE…YCVPDTFARN (89 aa)). Residues 581 to 615 (DFQQCNTSRDCNDHGVCNNFNHCHCDKGYNPPYCE) enclose the EGF-like; calcium-binding domain. The helical transmembrane segment at 650 to 670 (QLQLILYITLPLIMIISAVFI) threads the bilayer. Residues 671–709 (KQSKLSRLCGRERSEGTSCITEDSVSNTKMTTNEGSTLH) are Cytoplasmic-facing. The segment at 690-709 (ITEDSVSNTKMTTNEGSTLH) is disordered.

Interacts with TEX101. In terms of tissue distribution, detected in testis.

It localises to the membrane. Functionally, this is a non catalytic metalloprotease-like protein. May play a role in sperm-egg fusion. This chain is Disintegrin and metalloproteinase domain-containing protein 5 (Adam5), found in Rattus norvegicus (Rat).